Reading from the N-terminus, the 307-residue chain is D-alanine--D-alanine ligase (307 aa).

An ATP-grasp domain is found at 101–301 (KTVMRAAGVS…FGELVRWMVE (201 aa)). 127-182 (PLTPPYVVKPIAEGSSMGVIIVRDERSHPPQILASDEWVYGEEVLAETYVAGRELT) is a binding site for ATP. Mg(2+)-binding residues include Asp-251, Glu-268, and Asn-270.

The protein belongs to the D-alanine--D-alanine ligase family. Requires Mg(2+) as cofactor. It depends on Mn(2+) as a cofactor.

It is found in the cytoplasm. The catalysed reaction is 2 D-alanine + ATP = D-alanyl-D-alanine + ADP + phosphate + H(+). Its pathway is cell wall biogenesis; peptidoglycan biosynthesis. Cell wall formation. The chain is D-alanine--D-alanine ligase from Methylorubrum extorquens (strain PA1) (Methylobacterium extorquens).